Reading from the N-terminus, the 1737-residue chain is Complement C4 (1737 aa).

Residues 1–19 (MRLLWGLAWAFSFFASSLQ) form the signal peptide. The cysteines at positions 66 and 95 are disulfide-linked. Residues asparagine 224 and asparagine 664 are each glycosylated (N-linked (GlcNAc...) asparagine). A disulfide bond links cysteine 633 and cysteine 667. A propeptide spanning residues 674–677 (RQKR) is cleaved from the precursor. Cystine bridges form between cysteine 700–cysteine 726, cysteine 701–cysteine 733, and cysteine 714–cysteine 734. The 35-residue stretch at 700-734 (CCQDGMTKLPMARTCEQRAARVPQPACREPFLSCC) folds into the Anaphylatoxin-like domain. A glycan (N-linked (GlcNAc...) asparagine) is linked at asparagine 743. Positions 1005–1008 (CAEQ) form a cross-link, isoglutamyl cysteine thioester (Cys-Gln). N-linked (GlcNAc...) asparagine glycosylation is found at asparagine 1323 and asparagine 1386. Sulfotyrosine is present on residues tyrosine 1412, tyrosine 1414, and tyrosine 1416. Positions 1443–1446 (RRRR) are excised as a propeptide. 5 disulfide bridges follow: cysteine 1464/cysteine 1528, cysteine 1576/cysteine 1581, cysteine 1588/cysteine 1666, cysteine 1611/cysteine 1735, and cysteine 1711/cysteine 1720. The region spanning 1588 to 1735 (CPRQRRSLER…FLQEYSSQGC (148 aa)) is the NTR domain. Residue tyrosine 1676 is modified to Sulfotyrosine.

As to quaternary structure, in absence of complement activation, circulates in blood as a disulfide-linked trimer of an alpha, beta and gamma chain. Complement C4b is composed of complement C4b-A, complement C4 beta and complement C4 gamma chains that are associated via disulfide bonds. Non-enzymatic component of the C3 convertase, also named C4bC2b, composed of the serine protease complement C2b (C2), as well as complement C4b. Non-enzymatic component of the C5 convertase, also named C4bC2bC3b, composed of the serine protease complement C2b (C2), complement C3b, as well as complement C4b. Post-translationally, prior to secretion, the single-chain precursor is enzymatically cleaved by plasminogen (PLG) to yield non-identical chains alpha, beta and gamma. During activation of the complement systems, the alpha chain is cleaved into C4a and C4b by different proteases depending on the complement pathway: C4b stays linked to the beta and gamma chains, while C4a is released in the plasma. The alpha chain is cleaved by C1S to generate C4a and C4b following activation by the classical complement system. The alpha chain is cleaved to generate C4a and C4b by MASP2 following activation by the lectin complement system. The alpha chain is cleaved by GZMK to generate C4a and C4b following activation by the GZMK complement system. Further degradation of C4b by C1 into the inactive fragments C4c and C4d blocks the generation of C3 convertase. The proteolytic cleavages often are incomplete so that many structural forms can be found in plasma. Upon activation, the internal thioester bond reacts with carbohydrate antigens on the target surface to form amide or ester bonds, leading to covalent association with the surface of pathogens. In terms of processing, complement C4b interacts with complement C3b via a thioester linkage. Post-translationally, N- and O-glycosylated. O-glycosylated with a core 1 or possibly core 8 glycan.

The protein localises to the secreted. The protein resides in the cell surface. Precursor of non-enzymatic components of the classical, lectin and GZMK complement pathways, which consist in a cascade of proteins that leads to phagocytosis and breakdown of pathogens and signaling that strengthens the adaptive immune system. Functionally, non-enzymatic component of C3 and C5 convertases. Generated following cleavage by complement proteases (C1S, MASP2 or GZMK, depending on the complement pathway), it covalently attaches to the surface of pathogens, where it acts as an opsonin that marks the surface of antigens for removal. It then recruits the serine protease complement C2b to form the C3 and C5 convertases, which cleave and activate C3 and C5, respectively, the next components of the complement pathways. Complement C4b-A isotype is responsible for effective binding to form amide bonds with immune aggregates or protein antigens, while complement C4b-B isotype catalyzes the transacylation of the thioester carbonyl group to form ester bonds with carbohydrate antigens. Its function is as follows. Putative humoral mediator released following cleavage by complement proteases (C1S, MASP2 or GZMK, depending on the complement pathway). While it is strongly similar to anaphylatoxins, its role is unclear. Was reported to act as a mediator of local inflammatory process; however these effects were probably due to contamination with C3a and/C5a anaphylatoxins in biological assays. This Rattus norvegicus (Rat) protein is Complement C4.